The sequence spans 1273 residues: Clustered mitochondria protein homolog (1273 aa).

The Clu domain occupies 344-599 (PANNADYSRM…NTYPLDVKFA (256 aa)). TPR repeat units follow at residues 981–1013 (SDQK…KEEV), 1022–1055 (AEKY…YERV), and 1151–1184 (ATLE…FTRE). Disordered regions lie at residues 1217 to 1242 (AEQA…KAEL) and 1254 to 1273 (IEGG…KGKK). Residues 1262–1273 (SKKKSSKKKGKK) are compositionally biased toward basic residues.

It belongs to the CLU family. May associate with the eukaryotic translation initiation factor 3 (eIF-3) complex.

It is found in the cytoplasm. Functionally, mRNA-binding protein involved in proper cytoplasmic distribution of mitochondria. In Vanderwaltozyma polyspora (strain ATCC 22028 / DSM 70294 / BCRC 21397 / CBS 2163 / NBRC 10782 / NRRL Y-8283 / UCD 57-17) (Kluyveromyces polysporus), this protein is Clustered mitochondria protein homolog.